A 20-amino-acid chain; its full sequence is Pregnancy-associated glycoprotein 61C (20 aa).

This sequence belongs to the peptidase A1 family. N-glycosylated. Expressed in chorionic epithelium (trophectoderm).

It is found in the secreted. Its subcellular location is the extracellular space. The sequence is that of Pregnancy-associated glycoprotein 61C from Bubalus bubalis (Domestic water buffalo).